The sequence spans 239 residues: tRNA (guanine-N(7)-)-methyltransferase (239 aa).

Positions 69, 94, 121, and 144 each coordinate S-adenosyl-L-methionine. Asp-144 is an active-site residue. Residue Lys-148 coordinates substrate. The segment at 150 to 155 is interaction with RNA; it reads RHNKRR. Residues Asp-180 and 217–220 each bind substrate; that span reads TKFE.

This sequence belongs to the class I-like SAM-binding methyltransferase superfamily. TrmB family. As to quaternary structure, monomer.

The catalysed reaction is guanosine(46) in tRNA + S-adenosyl-L-methionine = N(7)-methylguanosine(46) in tRNA + S-adenosyl-L-homocysteine. It participates in tRNA modification; N(7)-methylguanine-tRNA biosynthesis. In terms of biological role, catalyzes the formation of N(7)-methylguanine at position 46 (m7G46) in tRNA. The polypeptide is tRNA (guanine-N(7)-)-methyltransferase (Salmonella typhi).